The following is an 858-amino-acid chain: Bifunctional uridylyltransferase/uridylyl-removing enzyme (858 aa).

Residues 1–324 (MSASVAAPPP…PATSGVTRVL (324 aa)) form a uridylyltransferase region. Residues 325–681 (SPGRFVEKQG…ARPSPVGDAL (357 aa)) are uridylyl-removing. Residues 443–565 (VDQHILMVLR…VGNERRLTAL (123 aa)) form the HD domain. 2 consecutive ACT domains span residues 682 to 761 (QVLV…PEPS) and 790 to 858 (ILSV…AIAV).

This sequence belongs to the GlnD family. It depends on Mg(2+) as a cofactor.

The catalysed reaction is [protein-PII]-L-tyrosine + UTP = [protein-PII]-uridylyl-L-tyrosine + diphosphate. It carries out the reaction [protein-PII]-uridylyl-L-tyrosine + H2O = [protein-PII]-L-tyrosine + UMP + H(+). Uridylyltransferase (UTase) activity is inhibited by glutamine, while glutamine activates uridylyl-removing (UR) activity. Modifies, by uridylylation and deuridylylation, the PII regulatory proteins (GlnB and homologs), in response to the nitrogen status of the cell that GlnD senses through the glutamine level. Under low glutamine levels, catalyzes the conversion of the PII proteins and UTP to PII-UMP and PPi, while under higher glutamine levels, GlnD hydrolyzes PII-UMP to PII and UMP (deuridylylation). Thus, controls uridylylation state and activity of the PII proteins, and plays an important role in the regulation of nitrogen assimilation and metabolism. The sequence is that of Bifunctional uridylyltransferase/uridylyl-removing enzyme from Burkholderia thailandensis (strain ATCC 700388 / DSM 13276 / CCUG 48851 / CIP 106301 / E264).